Reading from the N-terminus, the 235-residue chain is Aspartate/glutamate leucyltransferase (235 aa).

It belongs to the R-transferase family. Bpt subfamily.

The protein resides in the cytoplasm. It carries out the reaction N-terminal L-glutamyl-[protein] + L-leucyl-tRNA(Leu) = N-terminal L-leucyl-L-glutamyl-[protein] + tRNA(Leu) + H(+). The catalysed reaction is N-terminal L-aspartyl-[protein] + L-leucyl-tRNA(Leu) = N-terminal L-leucyl-L-aspartyl-[protein] + tRNA(Leu) + H(+). Its function is as follows. Functions in the N-end rule pathway of protein degradation where it conjugates Leu from its aminoacyl-tRNA to the N-termini of proteins containing an N-terminal aspartate or glutamate. The polypeptide is Aspartate/glutamate leucyltransferase (Pseudomonas paraeruginosa (strain DSM 24068 / PA7) (Pseudomonas aeruginosa (strain PA7))).